A 222-amino-acid polypeptide reads, in one-letter code: MTETSPPPVLDTAQARVLGCLIEKEATTPDAYPLTVNAAQVAANQKTAREPVLNLQTGVVHHALRQLETLGLVRQQFSSRAERYEHRLGSVLDLTRQQVALIGLLLLRGPQTLGELYARSERLARFNDADDVRHHLERLIQRGLAAQLPRASGQREDRYMHLLSGELDVEALQAAAARAAPSAPSGSDSSDLDARMQALEATVVELQEALAAVQARLEAAGA.

Belongs to the UPF0502 family.

The polypeptide is UPF0502 protein XCV4380 (Xanthomonas euvesicatoria pv. vesicatoria (strain 85-10) (Xanthomonas campestris pv. vesicatoria)).